The following is a 686-amino-acid chain: Probable ferric reductase transmembrane component (686 aa).

Transmembrane regions (helical) follow at residues 23–43 (LSGW…VPVV), 79–99 (TLWL…VGSA), 111–131 (VAAA…PLPY), 147–167 (VVVL…ATSG), 178–198 (WMGA…LPAV), 205–225 (TFYY…HVHS), and 256–276 (VTVV…ADLV). The Ferric oxidoreductase domain occupies 108-666 (LGRVAAAFMP…LAAGPQALVE (559 aa)). 308-314 (HPFTVAS) contributes to the FAD binding site. Residues 392 to 412 (LMVVGGSAISFGLPFLRILNF) form a helical membrane-spanning segment. 431–439 (ILSQFRSNF) serves as a coordination point for NAD(+). Residues Asn-506 and Asn-644 are each glycosylated (N-linked (GlcNAc...) asparagine).

FAD serves as cofactor.

The protein resides in the membrane. It carries out the reaction 2 a Fe(II)-siderophore + NAD(+) + H(+) = 2 a Fe(III)-siderophore + NADH. In terms of biological role, is required for the uptake of Fe(3+) ions. May participate in the transport of electrons from cytoplasm to an extracellular substrate (Fe(3+) ion) via FAD and heme intermediates. Involved in iron homeostasis. This chain is Probable ferric reductase transmembrane component (FRE8), found in Eremothecium gossypii (strain ATCC 10895 / CBS 109.51 / FGSC 9923 / NRRL Y-1056) (Yeast).